The following is a 622-amino-acid chain: Modification methylase LlaI (622 aa).

Belongs to the N(4)/N(6)-methyltransferase family.

The enzyme catalyses a 2'-deoxyadenosine in DNA + S-adenosyl-L-methionine = an N(6)-methyl-2'-deoxyadenosine in DNA + S-adenosyl-L-homocysteine + H(+). Its function is as follows. An alpha subtype methylase that modifies unknown specific adenine residues, and protects the DNA from cleavage by the LlaI endonuclease. The polypeptide is Modification methylase LlaI (Lactococcus lactis subsp. lactis (Streptococcus lactis)).